The sequence spans 394 residues: Phosphopentomutase (394 aa).

6 residues coordinate Mn(2+): aspartate 14, aspartate 287, histidine 292, aspartate 328, histidine 329, and histidine 340.

The protein belongs to the phosphopentomutase family. It depends on Mn(2+) as a cofactor.

The protein resides in the cytoplasm. It catalyses the reaction 2-deoxy-alpha-D-ribose 1-phosphate = 2-deoxy-D-ribose 5-phosphate. The catalysed reaction is alpha-D-ribose 1-phosphate = D-ribose 5-phosphate. It participates in carbohydrate degradation; 2-deoxy-D-ribose 1-phosphate degradation; D-glyceraldehyde 3-phosphate and acetaldehyde from 2-deoxy-alpha-D-ribose 1-phosphate: step 1/2. Isomerase that catalyzes the conversion of deoxy-ribose 1-phosphate (dRib-1-P) and ribose 1-phosphate (Rib-1-P) to deoxy-ribose 5-phosphate (dRib-5-P) and ribose 5-phosphate (Rib-5-P), respectively. The sequence is that of Phosphopentomutase from Listeria innocua serovar 6a (strain ATCC BAA-680 / CLIP 11262).